The primary structure comprises 1522 residues: Lysophospholipase nte1 (1522 aa).

The interval 1–24 (MADGVTQVDSTGLHSFSPSPSLSS) is disordered. At 1-65 (MADGVTQVDS…LPPVPTTMAG (65 aa)) the chain is on the cytoplasmic side. The span at 15 to 24 (SFSPSPSLSS) shows a compositional bias: low complexity. The helical transmembrane segment at 66–86 (WIGWVFSFFFQVIPSVLYWII) threads the bilayer. Over 87–108 (TFSTITLPTWLFTLFSMSLTFT) the chain is Lumenal. Residues 109–129 (MNFTTLLLIVLAVVSTISWFI) form a helical membrane-spanning segment. Residues 130–1522 (RYRFLNMYSR…RTLAPRRASI (1393 aa)) are Cytoplasmic-facing. 3 disordered regions span residues 308–384 (VPNS…SVHP), 523–544 (RAAT…GVSP), and 757–776 (TTTA…SRRR). The span at 369 to 381 (ESRKHSSRKRRKS) shows a compositional bias: basic residues. A nucleoside 3',5'-cyclic phosphate contacts are provided by residues 680-800 (GGTS…AVAS) and 840-960 (RLTS…IAQR). Residues 1219-1383 (LVLGGGGARG…IDNLTVDHMK (165 aa)) form the PNPLA domain. Positions 1223–1228 (GGGARG) match the GXGXXG motif. The GXSXG signature appears at 1250–1254 (GTSIG). Catalysis depends on Ser-1252, which acts as the Nucleophile. Asp-1370 serves as the catalytic Proton acceptor. Residues 1370 to 1372 (DGG) carry the DGA/G motif. The disordered stretch occupies residues 1501–1522 (LPEETEEKKKLQRTLAPRRASI).

It belongs to the NTE family.

Its subcellular location is the endoplasmic reticulum membrane. The enzyme catalyses a 1-acyl-sn-glycero-3-phosphocholine + H2O = sn-glycerol 3-phosphocholine + a fatty acid + H(+). Its activity is regulated as follows. Inhibited by organophosphorus esters. Intracellular phospholipase B that catalyzes the double deacylation of phosphatidylcholine (PC) to glycerophosphocholine (GroPCho). Plays an important role in membrane lipid homeostasis. Responsible for the rapid PC turnover in response to inositol, elevated temperatures, or when choline is present in the growth medium. This Aspergillus fumigatus (strain ATCC MYA-4609 / CBS 101355 / FGSC A1100 / Af293) (Neosartorya fumigata) protein is Lysophospholipase nte1 (nte1).